Here is a 297-residue protein sequence, read N- to C-terminus: Putative lipid kinase MamU (297 aa).

The region spanning 43–131 is the DAGKc domain; sequence EGKDMGRMVR…MDVGRVNDRY (89 aa). 68–74 is an ATP binding site; the sequence is GDGSLSR. The active-site Proton acceptor is the Glu-274.

Belongs to the diacylglycerol/lipid kinase family.

Its subcellular location is the cytoplasm. Its function is as follows. Might phosphorylate lipids. This is Putative lipid kinase MamU from Magnetospirillum gryphiswaldense (strain DSM 6361 / JCM 21280 / NBRC 15271 / MSR-1).